A 269-amino-acid chain; its full sequence is Regulatory protein RecX (269 aa).

This sequence belongs to the RecX family.

It localises to the cytoplasm. Its function is as follows. Modulates RecA activity. This chain is Regulatory protein RecX, found in Listeria welshimeri serovar 6b (strain ATCC 35897 / DSM 20650 / CCUG 15529 / CIP 8149 / NCTC 11857 / SLCC 5334 / V8).